Reading from the N-terminus, the 229-residue chain is Large ribosomal subunit protein uL1 (229 aa).

Belongs to the universal ribosomal protein uL1 family. As to quaternary structure, part of the 50S ribosomal subunit.

Its function is as follows. Binds directly to 23S rRNA. The L1 stalk is quite mobile in the ribosome, and is involved in E site tRNA release. Protein L1 is also a translational repressor protein, it controls the translation of the L11 operon by binding to its mRNA. This is Large ribosomal subunit protein uL1 from Haemophilus influenzae (strain PittEE).